A 548-amino-acid chain; its full sequence is Kinetochore and Eb1-associated basic protein (548 aa).

Disordered stretches follow at residues 1–51 (MSSM…PKHP) and 82–181 (YRSS…IRPK). Basic and acidic residues-rich tracts occupy residues 20 to 29 (RTKELLERQR), 104 to 116 (RTWE…EFRS), and 127 to 141 (PRPR…DLRS). The important for kinetochore and microtubule localization stretch occupies residues 100 to 253 (QNRQRTWEGP…TTSKRKLDFK (154 aa)). Over residues 144 to 155 (QGTPATKIPSQR) the composition is skewed to polar residues. Residues 149-152 (TKIP) carry the SXIP motif 1 motif. Residues 156–165 (NPKENQELSK) are compositionally biased toward basic and acidic residues. Positions 166-175 (SHTCIPSSEP) are enriched in polar residues. The short motif at 168 to 171 (TCIP) is the SXIP motif 2 element. The segment at 237-372 (SDKGIKLTTS…MCALPVVSEK (136 aa)) is CH (calponin-homology)-like region, which is not required for kinetochore and microtubule localization. The stretch at 386–457 (YDVMSLQQKF…LQLQRLRLQE (72 aa)) forms a coiled coil.

In terms of assembly, interacts with Eb1 via the two SxIP motifs; the interaction is not required for kebab kinetochore localization.

Its subcellular location is the cytoplasm. The protein resides in the perinuclear region. The protein localises to the chromosome. It is found in the centromere. It localises to the kinetochore. Its subcellular location is the cytoskeleton. The protein resides in the spindle. This Drosophila melanogaster (Fruit fly) protein is Kinetochore and Eb1-associated basic protein.